A 254-amino-acid chain; its full sequence is Leucyl/phenylalanyl-tRNA--protein transferase (254 aa).

It belongs to the L/F-transferase family.

The protein resides in the cytoplasm. The catalysed reaction is N-terminal L-lysyl-[protein] + L-leucyl-tRNA(Leu) = N-terminal L-leucyl-L-lysyl-[protein] + tRNA(Leu) + H(+). It carries out the reaction N-terminal L-arginyl-[protein] + L-leucyl-tRNA(Leu) = N-terminal L-leucyl-L-arginyl-[protein] + tRNA(Leu) + H(+). It catalyses the reaction L-phenylalanyl-tRNA(Phe) + an N-terminal L-alpha-aminoacyl-[protein] = an N-terminal L-phenylalanyl-L-alpha-aminoacyl-[protein] + tRNA(Phe). In terms of biological role, functions in the N-end rule pathway of protein degradation where it conjugates Leu, Phe and, less efficiently, Met from aminoacyl-tRNAs to the N-termini of proteins containing an N-terminal arginine or lysine. This chain is Leucyl/phenylalanyl-tRNA--protein transferase, found in Burkholderia orbicola (strain MC0-3).